Here is a 288-residue protein sequence, read N- to C-terminus: Histone-lysine N-methyltransferase Suv4-20 (288 aa).

Residues 128 to 238 (QECKRYSQEG…PGDEITCFYG (111 aa)) form the SET domain.

Belongs to the class V-like SAM-binding methyltransferase superfamily. Histone-lysine methyltransferase family. Suvar4-20 subfamily.

It is found in the nucleus. It localises to the chromosome. The enzyme catalyses N(6)-methyl-L-lysyl(20)-[histone H4] + S-adenosyl-L-methionine = N(6),N(6)-dimethyl-L-lysyl(20)-[histone H4] + S-adenosyl-L-homocysteine + H(+). It catalyses the reaction N(6),N(6)-dimethyl-L-lysyl(20)-[histone H4] + S-adenosyl-L-methionine = N(6),N(6),N(6)-trimethyl-L-lysyl(20)-[histone H4] + S-adenosyl-L-homocysteine + H(+). Functionally, histone methyltransferase that specifically di- and trimethylates 'Lys-20' of histone H4 (H4K20me2/me3). H4 'Lys-20' trimethylation represents a specific tag for epigenetic transcriptional repression. Contributes to dosage compensation of X chromosome-relative to autosome-linked gene expression, possibly by converting H4K20me1 to H4K20m2/me3 on autosomes. Involved in the regulation of growth and body fat metabolism downstream of the TOR complex 2 pathway. The protein is Histone-lysine N-methyltransferase Suv4-20 (set-4) of Caenorhabditis elegans.